The following is a 1389-amino-acid chain: Carboxypeptidase D (1389 aa).

A signal peptide spans 1–25 (MAGAARGLLWAALSLCLLPEPLRAA). Residues 26–1308 (HIKKAEAAAA…ENRIFGLPRE (1283 aa)) lie on the Extracellular side of the membrane. The Peptidase M14 1 domain occupies 46-383 (RYLHAAELGQ…ESLLTFIEKV (338 aa)). Residues 95–133 (LPEARQDGEKKKKEEEEEEEEEEGEEGGGGALPGRPQVK) form a disordered region. Residues 96 to 108 (PEARQDGEKKKKE) show a composition bias toward basic and acidic residues. The segment covering 109 to 120 (EEEEEEEEEGEE) has biased composition (acidic residues). 2 residues coordinate Zn(2+): His-139 and Glu-142. Residue Asn-172 is glycosylated (N-linked (GlcNAc...) asparagine). Positions 188–235 (ERAREGDCGGGGGGGGEGGGEPGGRENSRGRDLNRSFPDQFGSAQPDL) are disordered. The segment covering 195–209 (CGGGGGGGGEGGGEP) has biased composition (gly residues). Positions 210-221 (GGRENSRGRDLN) are enriched in basic and acidic residues. N-linked (GlcNAc...) asparagine glycosylation occurs at Asn-221. His-260 contributes to the Zn(2+) binding site. The Proton donor/acceptor role is filled by Glu-353. Asn-402, Asn-413, Asn-432, and Asn-472 each carry an N-linked (GlcNAc...) asparagine glycan. One can recognise a Peptidase M14 2 domain in the interval 511 to 801 (RHHHFSDMEI…RSLLQFIKQV (291 aa)). The Zn(2+) site is built by His-573 and Glu-576. A disordered region spans residues 614–639 (SMNPDGYEKSQEGDRGGTVGRNNSNN). The span at 619–628 (GYEKSQEGDR) shows a compositional bias: basic and acidic residues. N-linked (GlcNAc...) asparagine glycosylation is present at Asn-635. His-680 lines the Zn(2+) pocket. Glu-771 functions as the Proton donor/acceptor in the catalytic mechanism. 6 N-linked (GlcNAc...) asparagine glycosylation sites follow: Asn-820, Asn-876, Asn-958, Asn-981, Asn-1073, and Asn-1151. The region spanning 935–1220 (RYRPYKDLSE…KSLLSMLVEV (286 aa)) is the Peptidase M14 3 domain. Residues 1309-1329 (LVVTVAGASMSALVLTACIIW) traverse the membrane as a helical segment. S-palmitoyl cysteine attachment occurs at residues Cys-1326, Cys-1330, and Cys-1332. The Cytoplasmic segment spans residues 1330–1389 (CVCSIKSNRHKDGFPTLRQHHDDYEDEIRMMSTGSKKSLLSHEFQDETDTEEETLYSSKH). Residues 1367-1389 (SLLSHEFQDETDTEEETLYSSKH) form a disordered region.

This sequence belongs to the peptidase M14 family. In terms of assembly, binds to pre-S, hepatitis B virus large envelope protein, via the carboxypeptidase-like domain. It depends on Zn(2+) as a cofactor. In terms of processing, the N-terminus is blocked. Expressed in liver, lung, kidney, heart, stomach, pancreas, spleen, gall bladder and intestine, but not in skeletal muscle.

It localises to the cell membrane. It carries out the reaction Releases C-terminal Arg and Lys from polypeptides.. The protein is Carboxypeptidase D (CPD) of Anas platyrhynchos (Mallard).